Reading from the N-terminus, the 284-residue chain is D-tagatose-1,6-bisphosphate aldolase subunit GatY (284 aa).

The active-site Proton donor is the aspartate 82. Positions 83 and 180 each coordinate Zn(2+). Glycine 181 is a dihydroxyacetone phosphate binding site. Histidine 208 contacts Zn(2+). Dihydroxyacetone phosphate is bound by residues 209–211 and 230–233; these read GAS and NVAT.

This sequence belongs to the class II fructose-bisphosphate aldolase family. TagBP aldolase GatY subfamily. As to quaternary structure, forms a complex with GatZ. Zn(2+) serves as cofactor.

The catalysed reaction is D-tagatofuranose 1,6-bisphosphate = D-glyceraldehyde 3-phosphate + dihydroxyacetone phosphate. The protein operates within carbohydrate metabolism; D-tagatose 6-phosphate degradation; D-glyceraldehyde 3-phosphate and glycerone phosphate from D-tagatose 6-phosphate: step 2/2. In terms of biological role, catalytic subunit of the tagatose-1,6-bisphosphate aldolase GatYZ, which catalyzes the reversible aldol condensation of dihydroxyacetone phosphate (DHAP or glycerone-phosphate) with glyceraldehyde 3-phosphate (G3P) to produce tagatose 1,6-bisphosphate (TBP). Requires GatZ subunit for full activity and stability. Is involved in the catabolism of galactitol. This Escherichia coli O17:K52:H18 (strain UMN026 / ExPEC) protein is D-tagatose-1,6-bisphosphate aldolase subunit GatY.